Here is a 317-residue protein sequence, read N- to C-terminus: Acetyl-coenzyme A carboxylase carboxyl transferase subunit alpha (317 aa).

One can recognise a CoA carboxyltransferase C-terminal domain in the interval 40–294; the sequence is RLQHKSQELT…KQQILADLAE (255 aa).

It belongs to the AccA family. Acetyl-CoA carboxylase is a heterohexamer composed of biotin carboxyl carrier protein (AccB), biotin carboxylase (AccC) and two subunits each of ACCase subunit alpha (AccA) and ACCase subunit beta (AccD).

The protein localises to the cytoplasm. It carries out the reaction N(6)-carboxybiotinyl-L-lysyl-[protein] + acetyl-CoA = N(6)-biotinyl-L-lysyl-[protein] + malonyl-CoA. It functions in the pathway lipid metabolism; malonyl-CoA biosynthesis; malonyl-CoA from acetyl-CoA: step 1/1. Functionally, component of the acetyl coenzyme A carboxylase (ACC) complex. First, biotin carboxylase catalyzes the carboxylation of biotin on its carrier protein (BCCP) and then the CO(2) group is transferred by the carboxyltransferase to acetyl-CoA to form malonyl-CoA. This is Acetyl-coenzyme A carboxylase carboxyl transferase subunit alpha from Haemophilus ducreyi (strain 35000HP / ATCC 700724).